We begin with the raw amino-acid sequence, 210 residues long: Na(+)-translocating NADH-quinone reductase subunit D (210 aa).

A run of 5 helical transmembrane segments spans residues 42 to 62 (FVMT…VSLI), 72 to 92 (IIVQ…VLKA), 103 to 123 (VFVS…AFAM), 131 to 151 (FIDG…VAFF), and 178 to 198 (NGLM…IWAI).

This sequence belongs to the NqrDE/RnfAE family. In terms of assembly, composed of six subunits; NqrA, NqrB, NqrC, NqrD, NqrE and NqrF.

The protein localises to the cell inner membrane. The catalysed reaction is a ubiquinone + n Na(+)(in) + NADH + H(+) = a ubiquinol + n Na(+)(out) + NAD(+). Its function is as follows. NQR complex catalyzes the reduction of ubiquinone-1 to ubiquinol by two successive reactions, coupled with the transport of Na(+) ions from the cytoplasm to the periplasm. NqrA to NqrE are probably involved in the second step, the conversion of ubisemiquinone to ubiquinol. In Aliivibrio fischeri (strain ATCC 700601 / ES114) (Vibrio fischeri), this protein is Na(+)-translocating NADH-quinone reductase subunit D.